Consider the following 173-residue polypeptide: Shikimate kinase 1 (173 aa).

Residue 14–19 coordinates ATP; it reads GAGKST. Residue Ser-18 coordinates Mg(2+). Substrate contacts are provided by Asp-36, Arg-60, and Gly-82. Arg-120 contacts ATP. Arg-140 provides a ligand contact to substrate. Gln-157 lines the ATP pocket.

It belongs to the shikimate kinase family. As to quaternary structure, monomer. Mg(2+) is required as a cofactor.

Its subcellular location is the cytoplasm. It carries out the reaction shikimate + ATP = 3-phosphoshikimate + ADP + H(+). The protein operates within metabolic intermediate biosynthesis; chorismate biosynthesis; chorismate from D-erythrose 4-phosphate and phosphoenolpyruvate: step 5/7. In terms of biological role, catalyzes the specific phosphorylation of the 3-hydroxyl group of shikimic acid using ATP as a cosubstrate. This is Shikimate kinase 1 from Enterobacter sp. (strain 638).